We begin with the raw amino-acid sequence, 1064 residues long: Lysine-specific demethylase 4A (1064 aa).

An N-acetylalanine modification is found at Ala2. In terms of domain architecture, JmjN spans 14–56; it reads IMTFYPTMEEFRNFSRYIAYIESQGAHRAGLAKVVPPKEWKPR. Residue Tyr132 participates in 2-oxoglutarate binding. The 167-residue stretch at 142-308 folds into the JmjC domain; the sequence is EQHVDEWNIG…YGKQAVLCSC (167 aa). 2 residues coordinate Fe cation: His188 and Glu190. The 2-oxoglutarate site is built by Asn198 and Lys206. Cys234 and His240 together coordinate Zn(2+). A 2-oxoglutarate-binding site is contributed by Lys241. His276 lines the Fe cation pocket. 2 residues coordinate Zn(2+): Cys306 and Cys308. Disordered regions lie at residues 354-384, 434-489, 502-537, 549-573, and 590-643; these read LKDSGGLTPRAGSEECPEEDVEAADQGEEGD, LAPV…LDLS, SGSKKKSSSSLGSTSSQDSVSSDSETAESVSCQGQE, RGDGKAATGEPSVKKKRSAPRSISE, and NKKT…LSQL. Positions 368 to 382 are enriched in acidic residues; the sequence is ECPEEDVEAADQGEE. A compositionally biased stretch (basic and acidic residues) spans 460–472; that stretch reads TEVKFEELKNVKL. The segment covering 473 to 482 has biased composition (acidic residues); that stretch reads EEEDEEDEPE. Positions 509–525 are enriched in low complexity; sequence SSSLGSTSSQDSVSSDS. Ser523 bears the Phosphoserine mark. The segment covering 528–537 has biased composition (polar residues); sequence AESVSCQGQE. Residues 593-608 show a composition bias toward basic residues; it reads TKGRRQPLSKLPRHHP. Residues 597–638 form an interaction with NCOR1 region; sequence RQPLSKLPRHHPLVLQECGSDDETSEQLTPEEEAEETEAWAK. Residues 615 to 634 show a composition bias toward acidic residues; the sequence is GSDDETSEQLTPEEEAEETE. The segment at 709-767 adopts a PHD-type 1 zinc-finger fold; it reads MCFTTTGCSTDINLSTPYLEEDGTSMLVSCKKCSVRVHASCYGVPPAKASEEWMCSRCS. A C2HC pre-PHD-type zinc finger spans residues 772-805; the sequence is EEDCCLCSLRGGALQRANDDRWVHVSCAVAILEA. Residues 828-885 form a PHD-type 2 zinc finger; sequence LKCVFCKKRRKRNAGCCVQCSHGRCPTAFHVSCAQAAGVMMQPDDWPFVVFITCFRHK. Tudor domains follow at residues 897-954 and 955-1011; these read LSIT…CLQL and GPPA…EELP.

This sequence belongs to the JHDM3 histone demethylase family. In terms of assembly, interacts with histone deacetylase proteins HDAC1, HDAC2 and HDAC3. Interacts with RB and NCOR1. Interacts with VRK1. Fe(2+) serves as cofactor. Ubiquitinated by RNF8 and RNF168, leading to its degradation. Degradation promotes accessibility of H4K20me2 mark for DNA repair protein TP53BP1, which is then recruited. Also ubiquitinated by the SCF(FBXO22) complex; leading to proteasomal degradation. Widely expressed.

The protein localises to the nucleus. It catalyses the reaction N(6),N(6),N(6)-trimethyl-L-lysyl(9)-[histone H3] + 2 2-oxoglutarate + 2 O2 = N(6)-methyl-L-lysyl(9)-[histone H3] + 2 formaldehyde + 2 succinate + 2 CO2. It carries out the reaction N(6),N(6),N(6)-trimethyl-L-lysyl(36)-[histone H3] + 2 2-oxoglutarate + 2 O2 = N(6)-methyl-L-lysyl(36)-[histone H3] + 2 formaldehyde + 2 succinate + 2 CO2. Its function is as follows. Histone demethylase that specifically demethylates 'Lys-9' and 'Lys-36' residues of histone H3, thereby playing a central role in histone code. Does not demethylate histone H3 'Lys-4', H3 'Lys-27' nor H4 'Lys-20'. Demethylates trimethylated H3 'Lys-9' and H3 'Lys-36' residue, while it has no activity on mono- and dimethylated residues. Demethylation of Lys residue generates formaldehyde and succinate. Participates in transcriptional repression of ASCL2 and E2F-responsive promoters via the recruitment of histone deacetylases and NCOR1, respectively. This is Lysine-specific demethylase 4A (Kdm4a) from Mus musculus (Mouse).